Reading from the N-terminus, the 338-residue chain is DNA-directed RNA polymerase subunit alpha (338 aa).

The segment at methionine 1–glutamate 234 is alpha N-terminal domain (alpha-NTD). An alpha C-terminal domain (alpha-CTD) region spans residues phenylalanine 250 to phenylalanine 338.

This sequence belongs to the RNA polymerase alpha chain family. Homodimer. The RNAP catalytic core consists of 2 alpha, 1 beta, 1 beta' and 1 omega subunit. When a sigma factor is associated with the core the holoenzyme is formed, which can initiate transcription.

The catalysed reaction is RNA(n) + a ribonucleoside 5'-triphosphate = RNA(n+1) + diphosphate. Its function is as follows. DNA-dependent RNA polymerase catalyzes the transcription of DNA into RNA using the four ribonucleoside triphosphates as substrates. This Cereibacter sphaeroides (strain ATCC 17025 / ATH 2.4.3) (Rhodobacter sphaeroides) protein is DNA-directed RNA polymerase subunit alpha.